The sequence spans 503 residues: Lysine--tRNA ligase (503 aa).

The short motif at 23–31 (PSGPIHVGN) is the 'HIGH' region element. A 'KMSKS' region motif is present at residues 267-271 (AMHSS).

This sequence belongs to the class-I aminoacyl-tRNA synthetase family.

The protein localises to the cytoplasm. The enzyme catalyses tRNA(Lys) + L-lysine + ATP = L-lysyl-tRNA(Lys) + AMP + diphosphate. The sequence is that of Lysine--tRNA ligase from Thermoplasma volcanium (strain ATCC 51530 / DSM 4299 / JCM 9571 / NBRC 15438 / GSS1).